We begin with the raw amino-acid sequence, 1262 residues long: MFWHLLCVPNDENASAPDDGNQSCQPSSKQDQYLSPNRNCQKNLLRLYPPPPSKPPPLVGAILQTRLLHQISPSAIADADADLNAVGELLYPNVLQRSATLPAKHNRLGVRSRVTFKVPSSNLPAQDSYSHQPRNQVAVAAKDGILVDVKAKESVKMTSEDLLQPGHVVKERWKVVRKIGGGGFGEIYEGQDLITREQVALKVESARQPKQVLKMEVAVLKKLQGKEHVCRFIGCGRNDRFNYVVMQLQGKNLAELRRAQPRGAFSLSTTLRLGLQILKAIESIHSVGFLHRDIKPSNFSVGRLPYNCRRVYMLDFGLARQYTTGTGEVRCPRAAAGFRGTVRYASINAHRNREMGRHDDLWSLFYMLVEFVNGQLPWRKIKDKEQVGLTKEKYDHRILLKHLPSDLKQFLEHIQSLTYGDRPDYAMLIGLFERCMKRRGVKESDPYDWEKVDSTAIGNISATGNPSIPIKSDYMHGNITQMTVAASNASGTEYIRKRAEIETAHITATDPLNIKEKVDKNCNATSLAQPAKGSGEPMVQHGNAANNQNITSKGLQQQSTLTNSQVAIANIQSAPSMIEREDVQYTKLEEGAPTKFITMKPNGECDNVDIAAKCIFEQKHVEANDDIVGRASLSGVEQHYKSQIKKHNSPEIANKQIQRTGTVTNDKTSEVNRSTEEQKSTFGRLRVLTAPPMSVHDLPSGGGHSHQVSDLSGKQDPYAATSNAAPIGINSSSTKFGSQHGQIFGLAAMPPINRRSATSTNLRPSSSASQRINSGSTIGGAVGNGSNTARSSVAGDHSVTQFALIDDENVSALQQVTKGGALTLASQWKSQFDDSEDTTDNEWNREHQLQPNLEQLIKLDISLPLNEAKPFPQHGVAGTGKLINPPGEAKGRPKRYTLNITGIENYEALRISIPNCWSEPAMGNVLRKGLEPPAVQQAAFDDTVYRMDIARNVCVRETYSEITHLARPSTSSVLRNRLPSPFKKDSALQLNSTNDSLDKSRHRNSLPNVSVNDIFDDLQMKLNLDLGSAIQENNCCISGRLEIRVIPKDTSHPDDSVYYDAMGAVKNTPTANEGHDHSDQAVNNCDEMEATSAVIAFPNKSISKIMSPPGRDATEERTGASLCSLYSAGVNKLKLNGNTAPRTQFKKGSTDGFGENESEFDFPLLNPSKIPVRQSKCASWAGADFISASKPLESAEVPQEIPYHPQSDTTYSVIDSIPVRKTTYSIALECPPNISDLTPGLSYFYCNIVVPLRLFSILLTES.

Residues asparagine 13–serine 35 are disordered. The span at glycine 20–serine 35 shows a compositional bias: polar residues. One can recognise a Protein kinase domain in the interval tryptophan 173 to methionine 436. ATP-binding positions include isoleucine 179–isoleucine 187 and lysine 202. Aspartate 293 serves as the catalytic Proton acceptor. Disordered regions lie at residues threonine 662 to alanine 724, arginine 755 to serine 792, and lysine 984 to arginine 1003. Residues lysine 667–lysine 679 are compositionally biased toward basic and acidic residues. A compositionally biased stretch (polar residues) spans arginine 755 to serine 776.

The protein belongs to the protein kinase superfamily. CK1 Ser/Thr protein kinase family. In terms of assembly, interacts with Mgtor. Mg(2+) serves as cofactor. Detected in larval brain.

Its subcellular location is the cytoplasm. The protein localises to the cytoskeleton. The protein resides in the spindle. The catalysed reaction is L-seryl-[protein] + ATP = O-phospho-L-seryl-[protein] + ADP + H(+). It catalyses the reaction L-threonyl-[protein] + ATP = O-phospho-L-threonyl-[protein] + ADP + H(+). Probable serine/threonine protein kinase. This Drosophila melanogaster (Fruit fly) protein is Tau-tubulin kinase homolog Asator.